The following is a 676-amino-acid chain: RNA helicase NPH-II (676 aa).

The Helicase ATP-binding domain maps to 172–347; it reads FSAWISHRPV…VFLPNPAFIH (176 aa). Residue 185–192 coordinates ATP; the sequence is GGTGVGKT. The DEXH box motif lies at 296–299; that stretch reads DEVH. Positions 366–535 constitute a Helicase C-terminal domain; that stretch reads NPSSRMAYIE…NYILYANKFN (170 aa).

This sequence belongs to the DEAD box helicase family. DEAH subfamily. As to quaternary structure, monomer.

The protein localises to the virion. The enzyme catalyses ATP + H2O = ADP + phosphate + H(+). In terms of biological role, NTP-dependent helicase that catalyzes unidirectional unwinding of 3'tailed duplex RNAs and plays an important role during transcription of early mRNAs, presumably by preventing R-loop formation behind the elongating RNA polymerase. Might also play a role in the export of newly synthesized mRNA chains out of the core into the cytoplasm. Required for replication and propagation of viral particles. The chain is RNA helicase NPH-II (OPG084) from Vaccinia virus (strain Copenhagen) (VACV).